We begin with the raw amino-acid sequence, 152 residues long: SsrA-binding protein (152 aa).

Belongs to the SmpB family.

It is found in the cytoplasm. In terms of biological role, required for rescue of stalled ribosomes mediated by trans-translation. Binds to transfer-messenger RNA (tmRNA), required for stable association of tmRNA with ribosomes. tmRNA and SmpB together mimic tRNA shape, replacing the anticodon stem-loop with SmpB. tmRNA is encoded by the ssrA gene; the 2 termini fold to resemble tRNA(Ala) and it encodes a 'tag peptide', a short internal open reading frame. During trans-translation Ala-aminoacylated tmRNA acts like a tRNA, entering the A-site of stalled ribosomes, displacing the stalled mRNA. The ribosome then switches to translate the ORF on the tmRNA; the nascent peptide is terminated with the 'tag peptide' encoded by the tmRNA and targeted for degradation. The ribosome is freed to recommence translation, which seems to be the essential function of trans-translation. This is SsrA-binding protein from Rickettsia africae (strain ESF-5).